A 225-amino-acid polypeptide reads, in one-letter code: Germin-like protein 8-3 (225 aa).

A signal peptide spans 1–23 (MASSSLFLLASLLVLASWQQAIA). A disulfide bridge links Cys-33 with Cys-48. N-linked (GlcNAc...) asparagine glycans are attached at residues Asn-53 and Asn-78. The 154-residue stretch at 60–213 (FNAAKFDMPR…AFQVEKKVID (154 aa)) folds into the Cupin type-1 domain. Residues His-111, His-113, Glu-118, and His-158 each coordinate Mn(2+).

The protein belongs to the germin family. As to quaternary structure, oligomer (believed to be a pentamer but probably hexamer).

Its subcellular location is the secreted. It is found in the extracellular space. It localises to the apoplast. Plays a role in broad-spectrum disease resistance. Probably has no oxalate oxidase activity even if the active site is conserved. The protein is Germin-like protein 8-3 (GER2) of Oryza sativa subsp. japonica (Rice).